The sequence spans 555 residues: Xylulose kinase (555 aa).

Histidine 88, arginine 158, aspartate 274, and asparagine 275 together coordinate substrate. Residues tryptophan 357, 455–456 (GA), and asparagine 459 contribute to the ATP site.

It belongs to the FGGY kinase family.

The protein resides in the cytoplasm. The catalysed reaction is D-xylulose + ATP = D-xylulose 5-phosphate + ADP + H(+). This is Xylulose kinase from Schizosaccharomyces pombe (strain 972 / ATCC 24843) (Fission yeast).